Consider the following 1156-residue polypeptide: Condensin-2 complex subunit G2 (1156 aa).

The stretch at 460–498 is one HEAT repeat; that stretch reads MLPALKFCLHDNSEKVRVAFVDMLLKIKAVRAAKFWKIC. Positions 587–611 are disordered; it reads PNEDTEDEDDDEGDGEGIVRGDSEK. The segment covering 589–601 has biased composition (acidic residues); it reads EDTEDEDDDEGDG.

In terms of assembly, component of the condensin-2 complex, which contains the smc2 and smc4 heterodimer, and three non SMC subunits that probably regulate the complex: ncaph2, ncapd3 and ncapg2.

It is found in the nucleus. In terms of biological role, regulatory subunit of the condensin-2 complex, a complex which establishes mitotic chromosome architecture and is involved in physical rigidity of the chromatid axis. The chain is Condensin-2 complex subunit G2 (ncapg2) from Xenopus laevis (African clawed frog).